Here is a 256-residue protein sequence, read N- to C-terminus: Enolase-phosphatase E1 (256 aa).

Mg(2+) is bound by residues D13 and E15. Substrate contacts are provided by residues 127–128 and K175; that span reads SS. D202 serves as a coordination point for Mg(2+).

It belongs to the HAD-like hydrolase superfamily. MasA/MtnC family. As to quaternary structure, monomer. Mg(2+) is required as a cofactor.

It is found in the cytoplasm. The protein localises to the nucleus. The enzyme catalyses 5-methylsulfanyl-2,3-dioxopentyl phosphate + H2O = 1,2-dihydroxy-5-(methylsulfanyl)pent-1-en-3-one + phosphate. It participates in amino-acid biosynthesis; L-methionine biosynthesis via salvage pathway; L-methionine from S-methyl-5-thio-alpha-D-ribose 1-phosphate: step 3/6. Its pathway is amino-acid biosynthesis; L-methionine biosynthesis via salvage pathway; L-methionine from S-methyl-5-thio-alpha-D-ribose 1-phosphate: step 4/6. Bifunctional enzyme that catalyzes the enolization of 2,3-diketo-5-methylthiopentyl-1-phosphate (DK-MTP-1-P) into the intermediate 2-hydroxy-3-keto-5-methylthiopentenyl-1-phosphate (HK-MTPenyl-1-P), which is then dephosphorylated to form the acireductone 1,2-dihydroxy-3-keto-5-methylthiopentene (DHK-MTPene). In Botryotinia fuckeliana (strain B05.10) (Noble rot fungus), this protein is Enolase-phosphatase E1 (utr4).